A 59-amino-acid polypeptide reads, in one-letter code: Large ribosomal subunit protein bL32 (59 aa).

The span at 1–15 (MAVPKKKTSKSKRDM) shows a compositional bias: basic residues. A disordered region spans residues 1–26 (MAVPKKKTSKSKRDMRRATWNRKAAA).

The protein belongs to the bacterial ribosomal protein bL32 family.

The chain is Large ribosomal subunit protein bL32 from Cyanothece sp. (strain PCC 7425 / ATCC 29141).